A 35-amino-acid chain; its full sequence is Photosystem II reaction center protein Psb30 (35 aa).

A helical transmembrane segment spans residues Val7–Leu27.

Belongs to the Psb30/Ycf12 family. In terms of assembly, PSII is composed of 1 copy each of membrane proteins PsbA, PsbB, PsbC, PsbD, PsbE, PsbF, PsbH, PsbI, PsbJ, PsbK, PsbL, PsbM, PsbT, PsbX, PsbY, PsbZ, Psb30/Ycf12, peripheral proteins PsbO, CyanoQ (PsbQ), PsbU, PsbV and a large number of cofactors. It forms dimeric complexes.

It is found in the cellular thylakoid membrane. A core subunit of photosystem II (PSII), probably helps stabilize the reaction center. The polypeptide is Photosystem II reaction center protein Psb30 (Synechococcus sp. (strain JA-2-3B'a(2-13)) (Cyanobacteria bacterium Yellowstone B-Prime)).